A 507-amino-acid chain; its full sequence is DNA nucleotidylexotransferase (507 aa).

The short motif at 11–17 is the Nuclear localization signal element; the sequence is PLRKKAK. Positions 27-124 constitute a BRCT domain; sequence QHNVKFKEIV…RPVEIQNRHL (98 aa). The segment at 254 to 258 is involved in DNA binding; sequence VGLKT. Residues 329-334 and 338-341 each bind a 2'-deoxyribonucleoside 5'-triphosphate; these read GFRRGK and HDVD. Mg(2+) contacts are provided by Asp-339, Asp-341, and Asp-431. An a 2'-deoxyribonucleoside 5'-triphosphate-binding site is contributed by 446–447; the sequence is GW.

This sequence belongs to the DNA polymerase type-X family. Mg(2+) serves as cofactor. As to expression, found in the thymus and not in the spleen, kidney, intestine, or liver.

Its subcellular location is the nucleus. It carries out the reaction DNA(n) + a 2'-deoxyribonucleoside 5'-triphosphate = DNA(n+1) + diphosphate. Template-independent DNA polymerase which catalyzes the random addition of deoxynucleoside 5'-triphosphate to the 3'-end of a DNA initiator. One of the in vivo functions of this enzyme is the addition of nucleotides at the junction (N region) of rearranged Ig heavy chain and T-cell receptor gene segments during the maturation of B- and T-cells. This chain is DNA nucleotidylexotransferase (dntt), found in Xenopus laevis (African clawed frog).